The following is a 153-amino-acid chain: ORM1-like protein 2 (153 aa).

At M1 to G21 the chain is on the cytoplasmic side. The next 2 membrane-spanning stretches (helical) occupy residues I22–F42 and F43–F63. Topologically, residues L64–S105 are cytoplasmic. A helical transmembrane segment spans residues P106–I126. The Extracellular portion of the chain corresponds to N127–Y153.

The protein belongs to the ORM family. As to quaternary structure, ceramide-sensitive subunit of the serine palmitoyltransferase (SPT) complex, which is also composed of SPTLC1, SPTLC2/3 and SPTSSA/B.

It localises to the endoplasmic reticulum membrane. Plays an essential role in the homeostatic regulation of sphingolipid de novo biosynthesis by modulating the activity of the serine palmitoyltransferase (SPT) in response to ceramide levels. When complexed to SPT, the binding of ceramides to its N-terminus stabilizes a conformation that block SPT substrate entry, hence preventing SPT catalytic activity. Through this mechanism, maintains ceramide levels at sufficient concentrations for the production of complex sphingolipids, but which prevents the accumulation of ceramides to levels that trigger apoptosis. This chain is ORM1-like protein 2 (Ormdl2), found in Mus musculus (Mouse).